The sequence spans 119 residues: Large ribosomal subunit protein uL18 (119 aa).

A disordered region spans residues methionine 1–glycine 23.

Belongs to the universal ribosomal protein uL18 family. As to quaternary structure, part of the 50S ribosomal subunit; part of the 5S rRNA/L5/L18/L25 subcomplex. Contacts the 5S and 23S rRNAs.

Its function is as follows. This is one of the proteins that bind and probably mediate the attachment of the 5S RNA into the large ribosomal subunit, where it forms part of the central protuberance. In Chlorobium chlorochromatii (strain CaD3), this protein is Large ribosomal subunit protein uL18.